The primary structure comprises 271 residues: Mannosyl-3-phosphoglycerate phosphatase (271 aa).

The Nucleophile role is filled by D13. Mg(2+)-binding residues include D13, D15, and D214.

This sequence belongs to the HAD-like hydrolase superfamily. MPGP family. The cofactor is Mg(2+).

Its subcellular location is the cytoplasm. It catalyses the reaction 2-O-(alpha-D-mannosyl)-3-phosphoglycerate + H2O = (2R)-2-O-(alpha-D-mannosyl)-glycerate + phosphate. This is Mannosyl-3-phosphoglycerate phosphatase from Escherichia coli O139:H28 (strain E24377A / ETEC).